Reading from the N-terminus, the 102-residue chain is uncharacterized protein (102 aa).

It belongs to the Gram-positive plasmids replication protein type 2 family.

This is an uncharacterized protein from Staphylococcus aureus.